Here is a 56-residue protein sequence, read N- to C-terminus: Light-harvesting protein B-880 beta chain (56 aa).

Topologically, residues 1–22 are cytoplasmic; it reads AEIDRPVSLSGLTEGEAREFHG. Residues histidine 21 and histidine 39 each contribute to the a bacteriochlorophyll site. Residues 23–45 form a helical membrane-spanning segment; the sequence is VFMTSFMVFIAVAIVAHILAWMW. Residues 46–56 lie on the Periplasmic side of the membrane; sequence RPWIPGPEGYA.

This sequence belongs to the antenna complex beta subunit family. As to quaternary structure, the core complex is formed by different alpha and beta chains, binding bacteriochlorophyll molecules, and arranged most probably in tetrameric structures disposed around the reaction center. The non-pigmented gamma chains may constitute additional components.

It localises to the cell inner membrane. Functionally, antenna complexes are light-harvesting systems, which transfer the excitation energy to the reaction centers. In Afifella marina (Rhodobium marinum), this protein is Light-harvesting protein B-880 beta chain.